The sequence spans 880 residues: Alanine--tRNA ligase (880 aa).

Residues His566, His570, Cys668, and His672 each coordinate Zn(2+).

Belongs to the class-II aminoacyl-tRNA synthetase family. The cofactor is Zn(2+).

It localises to the cytoplasm. It carries out the reaction tRNA(Ala) + L-alanine + ATP = L-alanyl-tRNA(Ala) + AMP + diphosphate. Its function is as follows. Catalyzes the attachment of alanine to tRNA(Ala) in a two-step reaction: alanine is first activated by ATP to form Ala-AMP and then transferred to the acceptor end of tRNA(Ala). Also edits incorrectly charged Ser-tRNA(Ala) and Gly-tRNA(Ala) via its editing domain. In Acetivibrio thermocellus (strain ATCC 27405 / DSM 1237 / JCM 9322 / NBRC 103400 / NCIMB 10682 / NRRL B-4536 / VPI 7372) (Clostridium thermocellum), this protein is Alanine--tRNA ligase.